A 422-amino-acid polypeptide reads, in one-letter code: 5-hydroxytryptamine receptor 1A (422 aa).

Residues 1 to 38 (MDVLGPGQGNNTTSSEGPFGTRANATGISDVTFSYQVI) are Extracellular-facing. N-linked (GlcNAc...) asparagine glycosylation is found at Asn-10, Asn-11, and Asn-24. The helical transmembrane segment at 39–59 (TSLLLGTLIFCAVLGNACVVA) threads the bilayer. The Cytoplasmic segment spans residues 60 to 73 (AIALERSLQNVANY). Residues 74–98 (LIGSLAVTDLMVSVLVLPMAALYQV) form a helical membrane-spanning segment. Over 99–107 (LNKWTLGQV) the chain is Extracellular. The helical transmembrane segment at 108 to 132 (TCDLFIALDVLCCTSSILHLCAIAL) threads the bilayer. The cysteines at positions 109 and 187 are disulfide-linked. Asp-116 and Cys-120 together coordinate serotonin. The short motif at 133–135 (DRY) is the DRY motif; important for ligand-induced conformation changes element. Residues 133 to 152 (DRYWAITDPIDYVNKRTPRR) lie on the Cytoplasmic side of the membrane. The helical transmembrane segment at 153-174 (AAALISLTWLVGFLISIPPMLG) threads the bilayer. The Extracellular segment spans residues 175–193 (WRTPEDRSDPDACTISKDH). The helical transmembrane segment at 194-216 (GYTIYSTFGAFYIPLLLMLVLYG) threads the bilayer. Residues 217–346 (RIFRAARFRI…LARERKTVKT (130 aa)) are Cytoplasmic-facing. The disordered stretch occupies residues 237–262 (GADSRLGASPAPQRKKSANGELGSRE). 3 residues coordinate 1D-myo-inositol 4-phosphate: Lys-345, Thr-346, and Gly-352. A helical membrane pass occupies residues 347 to 370 (LGIIMGTFILCWLPFFIVALVLPF). At 371-378 (CESSCHMP) the chain is on the extracellular side. Residues 379–403 (TLLGAIINWLGYSNSLLNPVIYAYF) traverse the membrane as a helical segment. The NPxxY motif; important for ligand-induced conformation changes and signaling signature appears at 396 to 400 (NPVIY). Phe-403, Asn-404, and Lys-405 together coordinate 1D-myo-inositol 4-phosphate. The Cytoplasmic portion of the chain corresponds to 404-422 (NKDFQNAFKKILKCKFCRR).

It belongs to the G-protein coupled receptor 1 family. 5-hydroxytryptamine receptor subfamily. HTR1A sub-subfamily. In terms of assembly, heterodimer; heterodimerizes with GPER1. Interacts with YIF1B. Interacts with GPR39 and GALR1.

Its subcellular location is the cell membrane. The protein resides in the cell projection. It localises to the dendrite. Its activity is regulated as follows. G-protein coupled receptor activity is regulated by lipids: phosphatidylinositol 4-phosphate increases HTR1A-mediated activity. G-protein coupled receptor for 5-hydroxytryptamine (serotonin). Also functions as a receptor for various drugs and psychoactive substances. Ligand binding causes a conformation change that triggers signaling via guanine nucleotide-binding proteins (G proteins) and modulates the activity of downstream effectors, such as adenylate cyclase. HTR1A is coupled to G(i)/G(o) G alpha proteins and mediates inhibitory neurotransmission: signaling inhibits adenylate cyclase activity and activates a phosphatidylinositol-calcium second messenger system that regulates the release of Ca(2+) ions from intracellular stores. Beta-arrestin family members regulate signaling by mediating both receptor desensitization and resensitization processes. This chain is 5-hydroxytryptamine receptor 1A (HTR1A), found in Equus caballus (Horse).